A 142-amino-acid chain; its full sequence is Relaxin-3 (142 aa).

An N-terminal signal peptide occupies residues 1–25; the sequence is MARYKLLLLLAVWVLTGELWPGAEA. Disulfide bonds link Cys-35-Cys-129, Cys-47-Cys-142, and Cys-128-Cys-133. Residues 55-118 constitute a propeptide, connecting peptide; it reads SDILAHEAMG…GTPGALRGSR (64 aa).

It belongs to the insulin family. In terms of assembly, heterodimer of a B chain and an A chain linked by two disulfide bonds.

It is found in the secreted. Its function is as follows. May play a role in neuropeptide signaling processes. Ligand for LGR7, RXFP3 and RXFP4. The chain is Relaxin-3 (RLN3) from Pan troglodytes (Chimpanzee).